The following is an 847-amino-acid chain: Rho GTPase-activating protein 12 (847 aa).

One can recognise an SH3 domain in the interval 12–74 (PGQAYIEVEY…PAQYVKEVTR (63 aa)). Residues 110-241 (LPELSSFGKP…PPNQGRPDSP (132 aa)) are disordered. Polar residues-rich tracts occupy residues 117 to 174 (GKPS…QNRT) and 191 to 200 (TSFSQEQSCD). S165 carries the phosphoserine modification. S201, S213, and S215 each carry phosphoserine. Polar residues predominate over residues 224 to 234 (TEQIRATTPPN). Residues T230 and T231 each carry the phosphothreonine modification. Position 240 is a phosphoserine (S240). Y243 carries the post-translational modification Phosphotyrosine. 2 WW domains span residues 265-298 (IQIN…PPRW) and 358-391 (DYTN…LPKY). The tract at residues 293–317 (WKPPRWTRDASISKGDFQSPGDQEL) is disordered. 2 disordered regions span residues 428 to 466 (DTND…DQEK) and 591 to 625 (PDSP…SEQK). The segment covering 445-461 (NESSPSSPKHQDTASSP) has biased composition (polar residues). The PH domain maps to 463–575 (DQEKYGLLNV…WFKVLSSTIN (113 aa)). A Phosphoserine modification is found at S593. Over residues 595–610 (GIEKHDKEKEQKDPKK) the composition is skewed to basic and acidic residues. Positions 657–845 (SNLANLCQRE…LILLELSSIF (189 aa)) constitute a Rho-GAP domain.

Functionally, GTPase activator for the Rho-type GTPases by converting them to an inactive GDP-bound state. This Macaca fascicularis (Crab-eating macaque) protein is Rho GTPase-activating protein 12 (ARHGAP12).